A 171-amino-acid chain; its full sequence is S-ribosylhomocysteine lyase (171 aa).

Fe cation-binding residues include H54, H58, and C128.

The protein belongs to the LuxS family. In terms of assembly, homodimer. Requires Fe cation as cofactor.

The enzyme catalyses S-(5-deoxy-D-ribos-5-yl)-L-homocysteine = (S)-4,5-dihydroxypentane-2,3-dione + L-homocysteine. Involved in the synthesis of autoinducer 2 (AI-2) which is secreted by bacteria and is used to communicate both the cell density and the metabolic potential of the environment. The regulation of gene expression in response to changes in cell density is called quorum sensing. Catalyzes the transformation of S-ribosylhomocysteine (RHC) to homocysteine (HC) and 4,5-dihydroxy-2,3-pentadione (DPD). This is S-ribosylhomocysteine lyase from Escherichia fergusonii (strain ATCC 35469 / DSM 13698 / CCUG 18766 / IAM 14443 / JCM 21226 / LMG 7866 / NBRC 102419 / NCTC 12128 / CDC 0568-73).